The following is a 447-amino-acid chain: Hemogen (447 aa).

Residues 1–91 (MDLGKDQSLS…EMKVELPSQL (91 aa)) form a disordered region. Residues 7–86 (QSLSKLHQTP…RQQNTEMKVE (80 aa)) form a necessary for nuclear localization region. Basic and acidic residues-rich tracts occupy residues 14-25 (QTPDHHQEESHV) and 35-49 (RNRE…EAQE). Residues 59 to 78 (EKKHKRQRTGKRSERGRKRQ) are compositionally biased toward basic residues. Residues S89 and S122 each carry the phosphoserine modification. The disordered stretch occupies residues 137-156 (QESVTLQENSSEYQATAVQN). A Phosphoserine modification is found at S200. Disordered regions lie at residues 210-280 (AKVL…MAVP) and 306-337 (AMSK…PGSE). T217 is subject to Phosphothreonine. The segment covering 306 to 316 (AMSKDPSHKTT) has biased composition (basic and acidic residues).

Its subcellular location is the nucleus. Its function is as follows. Regulates the proliferation and differentiation of hematopoietic cells. Overexpression block the TPA-induced megakaryocytic differentiation in the K562 cell model. May also prevent cell apoptosis through the activation of the nuclear factor-kappa B (NF-kB). In Bos taurus (Bovine), this protein is Hemogen (HEMGN).